The following is a 156-amino-acid chain: Small ribosomal subunit protein uS7 (156 aa).

The protein belongs to the universal ribosomal protein uS7 family. As to quaternary structure, part of the 30S ribosomal subunit. Contacts proteins S9 and S11.

One of the primary rRNA binding proteins, it binds directly to 16S rRNA where it nucleates assembly of the head domain of the 30S subunit. Is located at the subunit interface close to the decoding center, probably blocks exit of the E-site tRNA. In Macrococcus caseolyticus (strain JCSC5402) (Macrococcoides caseolyticum), this protein is Small ribosomal subunit protein uS7.